The chain runs to 205 residues: Small ribosomal subunit protein uS4 (205 aa).

The segment at 18 to 49 (NIWGRPKSPVNKREYGPGQHGQRRKGKLSDFG) is disordered. Residues 94–157 (RRLDTVVYRA…KQLALVLEAN (64 aa)) form the S4 RNA-binding domain.

The protein belongs to the universal ribosomal protein uS4 family. Part of the 30S ribosomal subunit. Contacts protein S5. The interaction surface between S4 and S5 is involved in control of translational fidelity.

Functionally, one of the primary rRNA binding proteins, it binds directly to 16S rRNA where it nucleates assembly of the body of the 30S subunit. With S5 and S12 plays an important role in translational accuracy. The chain is Small ribosomal subunit protein uS4 from Nitrobacter hamburgensis (strain DSM 10229 / NCIMB 13809 / X14).